Reading from the N-terminus, the 131-residue chain is MPTIQQLVRKGRKNIKKKSKSMALNCCPQRKGVCTRVYTTTPKKPNSAMRKVARVRLTNGKEVNAYIPGEGHNLQEHSIVLIRGGRVKDLPGVRYHIIRGALDTAGVKDRKKARSKYGAKCSKKINKINKK.

Position 89 is a 3-methylthioaspartic acid (D89).

This sequence belongs to the universal ribosomal protein uS12 family. As to quaternary structure, part of the 30S ribosomal subunit. Contacts proteins S8 and S17. May interact with IF1 in the 30S initiation complex.

Functionally, with S4 and S5 plays an important role in translational accuracy. Its function is as follows. Interacts with and stabilizes bases of the 16S rRNA that are involved in tRNA selection in the A site and with the mRNA backbone. Located at the interface of the 30S and 50S subunits, it traverses the body of the 30S subunit contacting proteins on the other side and probably holding the rRNA structure together. The combined cluster of proteins S8, S12 and S17 appears to hold together the shoulder and platform of the 30S subunit. The chain is Small ribosomal subunit protein uS12 from Karelsulcia muelleri (strain GWSS) (Sulcia muelleri).